Here is a 141-residue protein sequence, read N- to C-terminus: Nucleoside diphosphate kinase (141 aa).

ATP-binding residues include Lys11, Phe59, Arg87, Thr93, Arg104, and Asn114. Catalysis depends on His117, which acts as the Pros-phosphohistidine intermediate.

Belongs to the NDK family. As to quaternary structure, homotetramer. Requires Mg(2+) as cofactor.

It localises to the cytoplasm. The catalysed reaction is a 2'-deoxyribonucleoside 5'-diphosphate + ATP = a 2'-deoxyribonucleoside 5'-triphosphate + ADP. The enzyme catalyses a ribonucleoside 5'-diphosphate + ATP = a ribonucleoside 5'-triphosphate + ADP. Functionally, major role in the synthesis of nucleoside triphosphates other than ATP. The ATP gamma phosphate is transferred to the NDP beta phosphate via a ping-pong mechanism, using a phosphorylated active-site intermediate. This is Nucleoside diphosphate kinase from Cupriavidus pinatubonensis (strain JMP 134 / LMG 1197) (Cupriavidus necator (strain JMP 134)).